A 714-amino-acid chain; its full sequence is Protein spire homolog 2 (714 aa).

The KIND domain occupies 22–203 (LSLEEVLKAY…RALFVETLEL (182 aa)). Residues 136 to 162 (DSEDSGCGAADEGYGGPEEEEEAEGVP) are disordered. WH2 domains lie at 248–262 (QLMR…LKKV), 278–296 (PFEM…LRKV), and 342–359 (LHEK…LRPV). Ser371, Ser440, Ser442, and Ser476 each carry phosphoserine. The disordered stretch occupies residues 453–516 (VASGLQSATH…SSGDRPEASM (64 aa)). The segment covering 486–496 (DQGTCPASVSD) has biased composition (polar residues). The tract at residues 534–554 (LALTVEEVMDVRRVLVKAEME) is spir-box.

It belongs to the spire family.

The protein localises to the cytoplasm. Its subcellular location is the cytoskeleton. The protein resides in the cytosol. It localises to the cell membrane. It is found in the cytoplasmic vesicle membrane. In terms of biological role, acts as an actin nucleation factor, remains associated with the slow-growing pointed end of the new filament. Involved in intracellular vesicle transport along actin fibers, providing a novel link between actin cytoskeleton dynamics and intracellular transport. Required for asymmetric spindle positioning and asymmetric cell division during meiosis. Required for normal formation of the cleavage furrow and for polar body extrusion during female germ cell meiosis. Also acts in the nucleus: together with SPIRE1 and SPIRE2, promotes assembly of nuclear actin filaments in response to DNA damage in order to facilitate movement of chromatin and repair factors after DNA damage. The protein is Protein spire homolog 2 (SPIRE2) of Homo sapiens (Human).